A 173-amino-acid chain; its full sequence is C-phycocyanin-3 beta subunit (173 aa).

An N4-methylasparagine modification is found at Asn-73. The (2R,3E)-phycocyanobilin site is built by Cys-83 and Cys-154.

This sequence belongs to the phycobiliprotein family. Heterodimer of an alpha and a beta subunit, which further assembles into trimers and the trimers into hexamers. In terms of processing, contains two covalently linked bilin chromophores.

It localises to the cellular thylakoid membrane. Its function is as follows. Light-harvesting photosynthetic bile pigment-protein from the phycobiliprotein complex (phycobilisome, PBS). Phycocyanin is the major phycobiliprotein in the PBS rod. The protein is C-phycocyanin-3 beta subunit (cpcB3) of Microchaete diplosiphon (Fremyella diplosiphon).